Reading from the N-terminus, the 605-residue chain is UvrABC system protein C (605 aa).

The GIY-YIG domain occupies 14 to 92 (QSCGVYKMVG…IKSLKPLYNI (79 aa)). Residues 202–237 (KEVKEQLLFTMRKCSSEENYELAAIYRDRVKFLEQI) form the UVR domain.

This sequence belongs to the UvrC family. In terms of assembly, interacts with UvrB in an incision complex.

It is found in the cytoplasm. Functionally, the UvrABC repair system catalyzes the recognition and processing of DNA lesions. UvrC both incises the 5' and 3' sides of the lesion. The N-terminal half is responsible for the 3' incision and the C-terminal half is responsible for the 5' incision. This chain is UvrABC system protein C, found in Wolbachia sp. subsp. Drosophila simulans (strain wRi).